The sequence spans 416 residues: Choline/ethanolaminephosphotransferase 1 (416 aa).

Residues 1–20 (MSGHRSTRKRCGDSHPESPV) are disordered. Ser-18 is modified (phosphoserine). Thr-40 is modified (phosphothreonine). Position 86 (Asn-86) interacts with CDP-choline. Helical transmembrane passes span 89–108 (TIIG…FYCP) and 116–133 (LWAY…QSLD). Asp-133 is a Mg(2+) binding site. Asn-144 carries N-linked (GlcNAc...) asparagine glycosylation. Residue Glu-151 participates in CDP-choline binding. Position 154 (Asp-154) interacts with Mg(2+). The active-site Proton acceptor is the His-155. Transmembrane regions (helical) follow at residues 156–176 (GCDS…VQLG), 180–199 (DWMF…AHWQ), 210–230 (IIDV…AVIG), 246–267 (MKLL…NYFR), 286–306 (VLSP…IYKK), 315–334 (HPCL…TNKL), 349–363 (TAFI…DQYF), and 368–388 (DEYI…IRYC). A Mg(2+)-binding site is contributed by Asp-158.

Belongs to the CDP-alcohol phosphatidyltransferase class-I family. Homodimer. Mg(2+) is required as a cofactor. It depends on Mn(2+) as a cofactor.

The protein resides in the endoplasmic reticulum membrane. It localises to the nucleus membrane. The catalysed reaction is CDP-ethanolamine + a 1,2-diacyl-sn-glycerol = a 1,2-diacyl-sn-glycero-3-phosphoethanolamine + CMP + H(+). It catalyses the reaction CDP-choline + a 1,2-diacyl-sn-glycerol = a 1,2-diacyl-sn-glycero-3-phosphocholine + CMP + H(+). The enzyme catalyses 1-O-alkyl-2-acyl-sn-glycerol + CDP-choline = a 1-O-alkyl-2-acyl-sn-glycero-3-phosphocholine + CMP + H(+). It carries out the reaction a 1-O-(1Z-alkenyl)-2-acyl-sn-glycerol + CDP-choline = a 1-O-(1Z-alkenyl)-2-acyl-sn-glycero-3-phosphocholine + CMP + H(+). The catalysed reaction is 1,2-dioctanoyl-sn-glycerol + CDP-choline = 1,2-dioctanoyl-sn-glycero-3-phosphocholine + CMP + H(+). It catalyses the reaction 1,2-didecanoyl-sn-glycerol + CDP-choline = 1,2-didecanoyl-sn-glycero-3-phosphocholine + CMP + H(+). The enzyme catalyses CDP-choline + 1,2-di-(9Z-octadecenoyl)-sn-glycerol = 1,2-di-(9Z-octadecenoyl)-sn-glycero-3-phosphocholine + CMP + H(+). It carries out the reaction 1-hexadecanoyl-2-(9Z-octadecenoyl)-sn-glycerol + CDP-choline = 1-hexadecanoyl-2-(9Z-octadecenoyl)-sn-glycero-3-phosphocholine + CMP + H(+). The catalysed reaction is CDP-ethanolamine + 1,2-di-(9Z-octadecenoyl)-sn-glycerol = 1,2-di-(9Z-octadecenoyl)-sn-glycero-3-phosphoethanolamine + CMP + H(+). It catalyses the reaction 1-hexadecanoyl-2-(9Z-octadecenoyl)-sn-glycerol + CDP-ethanolamine = 1-hexadecanoyl-2-(9Z-octadecenoyl)-sn-glycero-3-phosphoethanolamine + CMP + H(+). The enzyme catalyses 1-hexadecanoyl-2-(4Z,7Z,10Z,13Z,16Z,19Z-docosahexaenoyl)-sn-glycerol + CDP-choline = 1-hexadecanoyl-2-(4Z,7Z,10Z,13Z,16Z,19Z-docosahexaenoyl)-sn-glycero-3-phosphocholine + CMP + H(+). It carries out the reaction 1,2-di-(9Z-hexadecenoyl)-sn-glycerol + CDP-choline = 1,2-di-(9Z-hexadecenoyl)-sn-glycero-3-phosphocholine + CMP + H(+). The catalysed reaction is 1,2-di-(9Z-hexadecenoyl)-sn-glycerol + CDP-ethanolamine = 1,2-di-(9Z-hexadecenoyl)-sn-glycero-3-phosphoethanolamine + CMP + H(+). It catalyses the reaction 1-O-hexadecyl-2-acetyl-sn-glycerol + CDP-choline = 1-O-hexadecyl-2-acetyl-sn-glycero-3-phosphocholine + CMP + H(+). The enzyme catalyses 1-O-hexadecyl-2-(5Z,8Z,11Z,14Z-eicosatetraenoyl)-sn-glycerol + CDP-choline = 1-O-hexadecyl-2-(5Z,8Z,11Z,14Z)-eicosatetraenoyl-sn-glycero-3-phosphocholine + CMP + H(+). The protein operates within phospholipid metabolism; phosphatidylethanolamine biosynthesis; phosphatidylethanolamine from ethanolamine: step 3/3. It functions in the pathway phospholipid metabolism; phosphatidylcholine biosynthesis; phosphatidylcholine from phosphocholine: step 2/2. Its function is as follows. Catalyzes both phosphatidylcholine and phosphatidylethanolamine biosynthesis from CDP-choline and CDP-ethanolamine, respectively. Involved in protein-dependent process of phospholipid transport to distribute phosphatidyl choline to the lumenal surface. Has a higher cholinephosphotransferase activity than ethanolaminephosphotransferase activity. The protein is Choline/ethanolaminephosphotransferase 1 of Mus musculus (Mouse).